The sequence spans 142 residues: MSEALSLFSLFASSFLSATLLPGNSEVVLVAMLLSGISHPWVLVLTATMGNSLGGLTNVILGRFFPLRKTSRWQEKATGWLKRYGAVTLLLSWMPVVGDLLCLLAGWMRISWGPVIFFLCLGKALRYVAVAAATVQGMMWWH.

Residues 1 to 2 are Cytoplasmic-facing; the sequence is MS. The helical transmembrane segment at 3–23 threads the bilayer; the sequence is EALSLFSLFASSFLSATLLPG. Residues 24–26 lie on the Periplasmic side of the membrane; it reads NSE. The chain crosses the membrane as a helical span at residues 27–47; that stretch reads VVLVAMLLSGISHPWVLVLTA. Residues 48-86 lie on the Cytoplasmic side of the membrane; sequence TMGNSLGGLTNVILGRFFPLRKTSRWQEKATGWLKRYGA. A helical membrane pass occupies residues 87-107; the sequence is VTLLLSWMPVVGDLLCLLAGW. The Periplasmic portion of the chain corresponds to 108-142; sequence MRISWGPVIFFLCLGKALRYVAVAAATVQGMMWWH.

This sequence to H.influenzae HI_0489.

Its subcellular location is the cell inner membrane. This chain is Inner membrane protein YqaA (yqaA), found in Escherichia coli (strain K12).